The primary structure comprises 1431 residues: Stabilin-2 (1431 aa).

Topologically, residues 1–1322 (SLPSLLTRLE…PPTAATAAHS (1322 aa)) are extracellular. One can recognise an FAS1 domain in the interval 2–130 (LPSLLTRLEQ…GVIHGLEKVL (129 aa)). Residues asparagine 112 and asparagine 140 are each glycosylated (N-linked (GlcNAc...) asparagine). In terms of domain architecture, Laminin EGF-like 1 spans 207–272 (PQCQACPGRG…CSCVHGRCSQ (66 aa)). 18 disulfides stabilise this stretch: cysteine 212/cysteine 226, cysteine 220/cysteine 236, cysteine 238/cysteine 247, cysteine 259/cysteine 270, cysteine 263/cysteine 280, cysteine 282/cysteine 291, cysteine 300/cysteine 310, cysteine 304/cysteine 320, cysteine 322/cysteine 333, cysteine 339/cysteine 352, cysteine 346/cysteine 362, cysteine 364/cysteine 375, cysteine 381/cysteine 394, cysteine 388/cysteine 404, cysteine 406/cysteine 417, cysteine 423/cysteine 436, cysteine 430/cysteine 446, and cysteine 448/cysteine 459. 2 N-linked (GlcNAc...) asparagine glycosylation sites follow: asparagine 231 and asparagine 243. 4 consecutive EGF-like domains span residues 296-334 (TTDNCNGTCHTSANCLLDPDGKASCKCAAGFRGNGTVCT), 335-376 (AINA…IVCL), 377-418 (EINP…KVCS), and 419-460 (LINV…IVCR). A glycan (N-linked (GlcNAc...) asparagine) is linked at asparagine 301. The N-linked (GlcNAc...) asparagine glycan is linked to asparagine 329. The N-linked (GlcNAc...) asparagine glycan is linked to asparagine 437. FAS1 domains lie at 460-588 (RGSI…DKLL) and 604-745 (VLQN…DCLL). Asparagine 607 is a glycosylation site (N-linked (GlcNAc...) asparagine). Positions 822 to 887 (PDCQACPGGP…SCSEHGQCDE (66 aa)) constitute a Laminin EGF-like 2 domain. Disulfide bonds link cysteine 827–cysteine 841, cysteine 835–cysteine 851, cysteine 853–cysteine 862, cysteine 874–cysteine 885, cysteine 879–cysteine 895, and cysteine 897–cysteine 906. Asparagine 858 is a glycosylation site (N-linked (GlcNAc...) asparagine). Asparagine 929 carries N-linked (GlcNAc...) asparagine glycosylation. EGF-like domains lie at 947–987 (VVDF…YSCI) and 988–1030 (EIDP…VDCE). 8 disulfides stabilise this stretch: cysteine 951/cysteine 964, cysteine 958/cysteine 973, cysteine 975/cysteine 986, cysteine 992/cysteine 1006, cysteine 1000/cysteine 1016, cysteine 1018/cysteine 1029, cysteine 1085/cysteine 1154, and cysteine 1109/cysteine 1130. Residues 1063–1156 (GVFHLRSPLG…SEMWDVFCYR (94 aa)) enclose the Link domain. N-linked (GlcNAc...) asparagine glycans are attached at residues asparagine 1145, asparagine 1161, asparagine 1233, asparagine 1249, and asparagine 1258. The 135-residue stretch at 1176-1310 (SGNLLQVLMS…GILHIISEPL (135 aa)) folds into the FAS1 4 domain. A helical transmembrane segment spans residues 1323–1343 (GLGTGIFCAVVLVTGAIALAA). Topologically, residues 1344 to 1431 (YSYFRLKQRT…QQATTVTVPR (88 aa)) are cytoplasmic. The segment at 1368-1378 (WLLASSSPRIS) is interaction with TMSB4X.

As to quaternary structure, interacts with GULP1, heparin, alpha-M/beta-2 integrin (ITGAM and ITGB2), and thymosin beta 4 (TMSB4X). Post-translationally, glycosylated. In terms of processing, proteolytically processed to yield a 175 kDa protein. In terms of tissue distribution, initially expressed in all vascular cells, including those of sinusoidal-like structures, vitellin veins, and hepatic veins or sinus venosus, in E13.5 fetal liver. The expression then progressively disappears in the portal and hepatic veins, but the expression in sinusoidals endothelial cells (SECs) is retained and becomes stronger during development.

Its subcellular location is the cytoplasm. It localises to the cell membrane. In terms of biological role, phosphatidylserine receptor that enhances the engulfment of apoptotic cells. Hyaluronan receptor that binds to and mediates endocytosis of hyaluronic acid (HA). Also acts, in different species, as a primary systemic scavenger receptor for heparin (Hep), chondroitin sulfate (CS), dermatan sulfate (DS), nonglycosaminoglycan (GAG), acetylated low-density lipoprotein (AcLDL), pro-collagen propeptides and advanced glycation end products (AGE). May serve to maintain tissue integrity by supporting extracellular matrix turnover or it may contribute to maintaining fluidity of bodily liquids by resorption of hyaluronan. Counter receptor which plays an important role in lymphocyte recruitment in the hepatic vasculature. Binds to both Gram-positive and Gram-negative bacteria and may play a role in defense against bacterial infection. The proteolytically processed 175 kDa form also functions as an endocytosis receptor for heparin internalization as well as HA and CS. This Rattus norvegicus (Rat) protein is Stabilin-2.